We begin with the raw amino-acid sequence, 20 residues long: Peptidase T (20 aa).

The protein belongs to the peptidase M20B family. Zn(2+) serves as cofactor. The cofactor is Co(2+).

The protein localises to the cell envelope. The enzyme catalyses Release of the N-terminal residue from a tripeptide.. With respect to regulation, inhibited by the chelating agents EDTA and 1,10-phenanthroline, by bestatin and amastatin, p-hydroxymercuribenzoate and some divalent cations at high concentration. Functionally, cleaves a wide range of dipeptides and tripeptides, but does not display activity against larger peptides. May have a role in the survival of F.nucleatum in the subgingival environment of the mouth. The protein is Peptidase T (pepT) of Fusobacterium nucleatum subsp. polymorphum (Fusobacterium polymorphum).